Here is a 207-residue protein sequence, read N- to C-terminus: Outer-membrane lipoprotein LolB (207 aa).

An N-terminal signal peptide occupies residues 1-21 (MPTNTVRCLRLLPLASVLLAA). Residue Cys-22 is the site of N-palmitoyl cysteine attachment. A lipid anchor (S-diacylglycerol cysteine) is attached at Cys-22.

This sequence belongs to the LolB family. In terms of assembly, monomer.

The protein resides in the cell outer membrane. Its function is as follows. Plays a critical role in the incorporation of lipoproteins in the outer membrane after they are released by the LolA protein. The chain is Outer-membrane lipoprotein LolB from Pectobacterium carotovorum subsp. carotovorum (strain PC1).